Here is a 280-residue protein sequence, read N- to C-terminus: Protein HEAT-INDUCED TAS1 TARGET 4 (280 aa).

This sequence belongs to the heat induced plant HTT protein family. In terms of tissue distribution, expressed in seedlings, leaves, stems, inflorescences and siliques.

The protein resides in the cytoplasm. The protein localises to the nucleus. In terms of biological role, mediates both basal and acquired thermotolerance. This Arabidopsis thaliana (Mouse-ear cress) protein is Protein HEAT-INDUCED TAS1 TARGET 4.